A 300-amino-acid polypeptide reads, in one-letter code: Urease accessory protein UreD (300 aa).

The protein belongs to the UreD family. In terms of assembly, ureD, UreF and UreG form a complex that acts as a GTP-hydrolysis-dependent molecular chaperone, activating the urease apoprotein by helping to assemble the nickel containing metallocenter of UreC. The UreE protein probably delivers the nickel.

It localises to the cytoplasm. Functionally, required for maturation of urease via the functional incorporation of the urease nickel metallocenter. This Prochlorococcus marinus (strain MIT 9312) protein is Urease accessory protein UreD.